The sequence spans 526 residues: GMP synthase [glutamine-hydrolyzing] (526 aa).

A Glutamine amidotransferase type-1 domain is found at 9–208; the sequence is RILILDFGSQ…VKDICGCECL (200 aa). Cysteine 86 acts as the Nucleophile in catalysis. Catalysis depends on residues histidine 182 and glutamate 184. The GMPS ATP-PPase domain maps to 209–401; sequence WTPATIIDDA…LGLPYDMLYR (193 aa). Residue 236–242 participates in ATP binding; that stretch reads SGGVDSS.

In terms of assembly, homodimer.

The catalysed reaction is XMP + L-glutamine + ATP + H2O = GMP + L-glutamate + AMP + diphosphate + 2 H(+). The protein operates within purine metabolism; GMP biosynthesis; GMP from XMP (L-Gln route): step 1/1. In terms of biological role, catalyzes the synthesis of GMP from XMP. The chain is GMP synthase [glutamine-hydrolyzing] from Aeromonas salmonicida (strain A449).